The sequence spans 255 residues: Thiazole synthase (255 aa).

K96 (schiff-base intermediate with DXP) is an active-site residue. Residues G157, 183 to 184, and 205 to 206 contribute to the 1-deoxy-D-xylulose 5-phosphate site; these read AG and NS.

This sequence belongs to the ThiG family. As to quaternary structure, homotetramer. Forms heterodimers with either ThiH or ThiS.

It is found in the cytoplasm. It carries out the reaction [ThiS sulfur-carrier protein]-C-terminal-Gly-aminoethanethioate + 2-iminoacetate + 1-deoxy-D-xylulose 5-phosphate = [ThiS sulfur-carrier protein]-C-terminal Gly-Gly + 2-[(2R,5Z)-2-carboxy-4-methylthiazol-5(2H)-ylidene]ethyl phosphate + 2 H2O + H(+). The protein operates within cofactor biosynthesis; thiamine diphosphate biosynthesis. In terms of biological role, catalyzes the rearrangement of 1-deoxy-D-xylulose 5-phosphate (DXP) to produce the thiazole phosphate moiety of thiamine. Sulfur is provided by the thiocarboxylate moiety of the carrier protein ThiS. In vitro, sulfur can be provided by H(2)S. The polypeptide is Thiazole synthase (Exiguobacterium sibiricum (strain DSM 17290 / CCUG 55495 / CIP 109462 / JCM 13490 / 255-15)).